The sequence spans 353 residues: GTPase Obg (353 aa).

An Obg domain is found at M1–I159. An OBG-type G domain is found at A160–G327. GTP is bound by residues G166–S173, F191–H195, D212–G215, N279–D282, and S308–V310. S173 and T193 together coordinate Mg(2+).

This sequence belongs to the TRAFAC class OBG-HflX-like GTPase superfamily. OBG GTPase family. As to quaternary structure, monomer. The cofactor is Mg(2+).

The protein localises to the cytoplasm. Functionally, an essential GTPase which binds GTP, GDP and possibly (p)ppGpp with moderate affinity, with high nucleotide exchange rates and a fairly low GTP hydrolysis rate. Plays a role in control of the cell cycle, stress response, ribosome biogenesis and in those bacteria that undergo differentiation, in morphogenesis control. This chain is GTPase Obg, found in Rhodopseudomonas palustris (strain BisB5).